The following is a 431-amino-acid chain: Ammonium transporter 3 (431 aa).

Over 1–27 (MEQFSTSSSESSDSSSEYSLEFYMDTS) the chain is Extracellular. The chain crosses the membrane as a helical span at residues 28 to 48 (WVLDAANLVFFMQAGFGMLEA). At 49-63 (GMVRAKNTKSILLKN) the chain is on the cytoplasmic side. Residues 64-84 (LINTAICAISYYCVGHSFAYG) form a helical membrane-spanning segment. The Extracellular portion of the chain corresponds to 85 to 102 (KVNPNSFVGFGNFFLMDY). Residues 103–125 (THYAYWMIQWAYAATATTIATGA) traverse the membrane as a helical segment. At 126 to 134 (MAERLQLHC) the chain is on the cytoplasmic side. A helical membrane pass occupies residues 135 to 155 (YILFTLVQTILIYPFVAHWIW). Over 156–160 (SQNGW) the chain is Extracellular. A helical transmembrane segment spans residues 161 to 181 (LFDLGIVDFAGGAVIHIVAGI). The Cytoplasmic segment spans residues 182–211 (TGACGSFLLGPRIGRFNQESGKPKNLPGHS). The chain crosses the membrane as a helical span at residues 212-232 (VVLMSLGAMILWYSWYGYTAG). Residues 233–249 (ASLGMTRSRVLPASRVS) are Extracellular-facing. Residues 250–270 (VVVTLSGATGLITVLGIGKIF) form a helical membrane-spanning segment. Topologically, residues 271–300 (NGHYDLVKGINGLIAGLVSSTSSCAYIEPW) are cytoplasmic. Residues 301-321 (AAIIIGFIGGIVYWFSSWALL) traverse the membrane as a helical segment. The Extracellular segment spans residues 322–333 (NWLRLDDPVDST). The helical transmembrane segment at 334-354 (AIHLFGGCWSLISVAFFATHG) threads the bilayer. Residues 355–357 (RVR) are Cytoplasmic-facing. The helical transmembrane segment at 358–378 (NPDIILPGGIFYGGGISLLWV) threads the bilayer. Gln-379 is a topological domain (extracellular). Residues 380 to 400 (LVGMVLAILWAGFLSGIFFFT) traverse the membrane as a helical segment. Topologically, residues 401 to 431 (MDYFGKLRVDVDTELAGLDNSNHGGSAYIFD) are cytoplasmic.

Belongs to the ammonia transporter channel (TC 1.A.11.2) family.

Its subcellular location is the cell membrane. The protein localises to the endosome membrane. The protein resides in the cytoplasmic vesicle. It is found in the phagosome membrane. In terms of biological role, ammonium transporter that mediates the import of ammonium in prespore cells. Controls ammonium homeostasis during growth and development. Ammonium has been shown to function as a morphogen at multiple steps during the development. May function as an ammonia sensor that relays information concerning ammonia concentrations to the signaling pathway involved in the slug versus culmination choice and regulates prestalk gene expression. This is Ammonium transporter 3 (amtC) from Dictyostelium discoideum (Social amoeba).